A 483-amino-acid polypeptide reads, in one-letter code: MDLKELLHGVQAKIYGKVRPLEVRNLTRDSRCVSVGDIFIAHKGQRYDGNDFAVDALANGAIAIASSLYNPFLSVVQIITPNLEELEAELSAKYYEYPSSKLHTIGVTGTNGKTTVTCLIKALLDSYQKPSGLLGTIEHILGEGVIKDGFTTPTPALLQKYLATMVRQNRDAVVMEVSSIGLASGRVAYTNFDTAVLTNITLDHLDFHGTFETYVAAKAKLFSLVPPSGMVVINTDSPYASQCIESAKAPVITYGIESAADYRATDIQLSSSGTKYTLVYGDQKIACSSSFIGKYNVYNLLAAISTVHASLRCDLEDLLEKIGLCQPPPGRLDPVLMGPCPVYIDYAHTPDALDNVLTGLHELLPEGGRLIVVFGCGGDRDRSKRKLMAQVVERYGFAVVTSDNPRSEPPEDIVNEICDGFYSKNYFIEIDRKQAITYALSIASDRDIVLIAGKGHEAYQIFKHQTVAFDDKQTVCEVLASYV.

Residue serine 30 coordinates UDP-N-acetyl-alpha-D-muramoyl-L-alanyl-D-glutamate. 109-115 (GTNGKTT) is an ATP binding site. UDP-N-acetyl-alpha-D-muramoyl-L-alanyl-D-glutamate contacts are provided by residues 151–152 (TT), serine 178, and arginine 186. At lysine 218 the chain carries N6-carboxylysine. Meso-2,6-diaminopimelate-binding positions include arginine 380, 403–406 (DNPR), glycine 453, and glutamate 457. The short motif at 403–406 (DNPR) is the Meso-diaminopimelate recognition motif element.

It belongs to the MurCDEF family. MurE subfamily. The cofactor is Mg(2+). Post-translationally, carboxylation is probably crucial for Mg(2+) binding and, consequently, for the gamma-phosphate positioning of ATP.

It localises to the cytoplasm. The catalysed reaction is UDP-N-acetyl-alpha-D-muramoyl-L-alanyl-D-glutamate + meso-2,6-diaminopimelate + ATP = UDP-N-acetyl-alpha-D-muramoyl-L-alanyl-gamma-D-glutamyl-meso-2,6-diaminopimelate + ADP + phosphate + H(+). The protein operates within cell wall biogenesis; peptidoglycan biosynthesis. Functionally, catalyzes the addition of meso-diaminopimelic acid to the nucleotide precursor UDP-N-acetylmuramoyl-L-alanyl-D-glutamate (UMAG) in the biosynthesis of bacterial cell-wall peptidoglycan. The protein is UDP-N-acetylmuramoyl-L-alanyl-D-glutamate--2,6-diaminopimelate ligase of Chlamydia pneumoniae (Chlamydophila pneumoniae).